A 218-amino-acid chain; its full sequence is Cytidylate kinase (218 aa).

Position 7–15 (7–15 (GPSASGKSS)) interacts with ATP.

The protein belongs to the cytidylate kinase family. Type 1 subfamily.

It is found in the cytoplasm. It carries out the reaction CMP + ATP = CDP + ADP. It catalyses the reaction dCMP + ATP = dCDP + ADP. This is Cytidylate kinase from Borrelia duttonii (strain Ly).